The sequence spans 229 residues: MVKYLSQSEAINVDQELFNDYKFSVDQLMELAGLSCAHAISKCFPTDKYGRVLICCGPGNNGGDGLVCARHLALMGYTPTIYYPKPTAKPLYENLSHQCKLMEICRVEDCPAINEAASNFDLIVDALFGFSFKPPVRAEFVAIVELMQQTTLPIASVDIPSGWDVEKGKVNDSDLEPDLLISLTAPKICARNFKGRYHYLGGRFVPPALQRKYDLNLPTYPGNELCLKL.

Positions 10-217 (AINVDQELFN…ALQRKYDLNL (208 aa)) constitute a YjeF N-terminal domain. 60–64 (NNGGD) lines the (6S)-NADPHX pocket. K(+)-binding residues include asparagine 61 and aspartate 125. (6S)-NADPHX contacts are provided by residues 129–135 (GFSFKPP) and aspartate 158. Residue serine 161 coordinates K(+).

Belongs to the NnrE/AIBP family. The cofactor is K(+).

The enzyme catalyses (6R)-NADHX = (6S)-NADHX. The catalysed reaction is (6R)-NADPHX = (6S)-NADPHX. Its function is as follows. Catalyzes the epimerization of the S- and R-forms of NAD(P)HX, a damaged form of NAD(P)H that is a result of enzymatic or heat-dependent hydration. This is a prerequisite for the S-specific NAD(P)H-hydrate dehydratase to allow the repair of both epimers of NAD(P)HX. This Drosophila ananassae (Fruit fly) protein is NAD(P)H-hydrate epimerase.